A 454-amino-acid chain; its full sequence is Bifunctional protein GlmU (454 aa).

Residues 1–225 (MNIVILAAGM…VWETLGVNSK (225 aa)) form a pyrophosphorylase region. Residues 6–9 (LAAG), lysine 20, glutamine 71, 76–77 (GT), 98–100 (YGD), glycine 135, glutamate 150, asparagine 165, and asparagine 223 contribute to the UDP-N-acetyl-alpha-D-glucosamine site. Aspartate 100 provides a ligand contact to Mg(2+). Asparagine 223 is a binding site for Mg(2+). Residues 226 to 246 (LQLAEVERIHQGNQARRLLEA) are linker. The N-acetyltransferase stretch occupies residues 247–454 (GVTLLDPARI…WQRPVKQPKQ (208 aa)). The UDP-N-acetyl-alpha-D-glucosamine site is built by arginine 329 and lysine 347. The active-site Proton acceptor is histidine 359. The UDP-N-acetyl-alpha-D-glucosamine site is built by tyrosine 362 and asparagine 373. Residues alanine 376, 382–383 (NY), serine 401, alanine 419, and arginine 436 each bind acetyl-CoA.

In the N-terminal section; belongs to the N-acetylglucosamine-1-phosphate uridyltransferase family. The protein in the C-terminal section; belongs to the transferase hexapeptide repeat family. Homotrimer. The cofactor is Mg(2+).

Its subcellular location is the cytoplasm. The enzyme catalyses alpha-D-glucosamine 1-phosphate + acetyl-CoA = N-acetyl-alpha-D-glucosamine 1-phosphate + CoA + H(+). It carries out the reaction N-acetyl-alpha-D-glucosamine 1-phosphate + UTP + H(+) = UDP-N-acetyl-alpha-D-glucosamine + diphosphate. Its pathway is nucleotide-sugar biosynthesis; UDP-N-acetyl-alpha-D-glucosamine biosynthesis; N-acetyl-alpha-D-glucosamine 1-phosphate from alpha-D-glucosamine 6-phosphate (route II): step 2/2. It functions in the pathway nucleotide-sugar biosynthesis; UDP-N-acetyl-alpha-D-glucosamine biosynthesis; UDP-N-acetyl-alpha-D-glucosamine from N-acetyl-alpha-D-glucosamine 1-phosphate: step 1/1. It participates in bacterial outer membrane biogenesis; LPS lipid A biosynthesis. Catalyzes the last two sequential reactions in the de novo biosynthetic pathway for UDP-N-acetylglucosamine (UDP-GlcNAc). The C-terminal domain catalyzes the transfer of acetyl group from acetyl coenzyme A to glucosamine-1-phosphate (GlcN-1-P) to produce N-acetylglucosamine-1-phosphate (GlcNAc-1-P), which is converted into UDP-GlcNAc by the transfer of uridine 5-monophosphate (from uridine 5-triphosphate), a reaction catalyzed by the N-terminal domain. This chain is Bifunctional protein GlmU, found in Cupriavidus taiwanensis (strain DSM 17343 / BCRC 17206 / CCUG 44338 / CIP 107171 / LMG 19424 / R1) (Ralstonia taiwanensis (strain LMG 19424)).